Here is a 176-residue protein sequence, read N- to C-terminus: Oligoribonuclease (176 aa).

The 158-residue stretch at 2–159 folds into the Exonuclease domain; the sequence is EMTGLNPETD…DDILESIEEM (158 aa). Y117 is an active-site residue.

Belongs to the oligoribonuclease family.

The protein localises to the cytoplasm. 3'-to-5' exoribonuclease specific for small oligoribonucleotides. This is Oligoribonuclease from Neisseria gonorrhoeae (strain ATCC 700825 / FA 1090).